Consider the following 2203-residue polypeptide: MGAQVSTQKTGAHETGLNASGNSIIHYTNINYYKDSASNSANRQDFTQDPSKFTEPVKDVMIKTLPALNSPSAEECGFSDRVRSITIGNSTITTQECANVVVAYGRWPAYLRDDEATAEDQPTQPDVATCRFYTLESVQWQENSAGWWWKFPDALSNMGLFGQNMLYHYLGRSGYTIHVQCNASKFHQGRPIVVCVPEAEMGCSKVDGVVNAQGLSKGETPIEFERTSTTAEVGVVQKAVYNAGMGVGVGNLTIFPHQWINLRRNNSATIVIPYINCVPMDNMFRHNNFTLMVILFAPLKSSGGTNYVSITITVAPMDAEYNGLRLAGHQGLPTMNTPGSTQFLTSDDFQSPCAMPEFDVTPCMDIPGEVHNLMEIAEVDSVVPVNNTSTHMEGTDAFQIKVTAGNVQDKSAIFSFQLNPGNSTVLRRTLLGEILNYYAHWSGSIKLTFLFCGSAMATGKLLLAYSHAGASVPKSRRDAMLGTHVIWDVGLQSSCVLCVPWISQTHYRLVAQDEYTSAGYITCWYQTNIVVPPETPSDCVVLCFVSACNDFSVRMLKDTPFIEQAAELQNDVRQAVEGAIGRVADTIRSGPSNSEAVPALTAAETGHTSQVVPSDTMQTRHVKNYHSRSESTIENFLCRSACVRMAKYEARGDPESTDRFDAWEISVRDMVQMRRKCEMFTYLRFDVEVTFVITSYQHQGSINQDMPPMTHQIMYIPPGGPFPKKVDGYEWQTSTNPSIFWTEGNAPPRMSIPFISIGNAYSSFYDGWSHFDSKGAYGFNTLNKMGHIYCRHVNKETPAEVTSYIRIYFKPKHIRAWVPRPPRLCQYKNKANVNFEATAFTETRDTINTVPVSNHGSGRRGDLAALSTHGAFGQESGAVYVGNYRVLNRHLATHTDWQNCIWEDYNRDLLVSTTTAHGCDTIARCQCKTGVFFCQSKNKHYPVSFEGPGLVEVQESEYYPKRYQSHVLLAAGFSEPGDCGGILRCDHGVIGLVTMGGEGVVGFADVRDLLWLEDDAMEQGVKDYVEQLGNAFGSGFTNQICEQVNLLKESLIGQDSVLEKSLKALVKIISALVIVVRNQDDLITVTATLALIGCTTSPWRWLKQKVSQYYGIPMAERQSNGWLKKFTEMTNACKGMEWIAVKIQKFIEWLKVKNLPEVKEKHEFLNRLKQLPLLESQIATIEQSAPSQSDQEQLFSNVQYFAHYCRKYAPLYAAEAKRVFSLEKKMSNYIQFKSKCRIEPVCLLLHGSPGAGKSVATNLIGRSLAEKLNSSVYSLPPDPDHFDGYKQQAVVIMDDLCQNPDGKDVSLFCQMVSSVDFVPPMAALEEKGILFTSPFVLASTNAGSINAPTVSDSRALARRFHFDMNIEVISMYSQNGKINMPMSVKTCDEECCPVNFKRCCPLVCGKAIQFIDRRTQVRYSLDMLVTEMFREYNHRHSVGATLEALFQGPPVYREIKISVAPETPPPPAIADLLKSVDSEAVREYCKERGWLVPEINSTLQIEKHVSRAFICLQALTTFVSVAGIIYIIYKLFAGFQGAYTGMPNKKPKVPTLRQAKVQGPAFEFAVAMMKRNASTVKTEYGEFTMLGIYDRWAVLPRHAKPGSTILMNDQEVCLLDAKELVDKDGINLELTLLKLNRNEKFRDIRGFLAREEVEVNEAVLAINTSKFPNMYIPVGQVTDYGFLNLGGTPTKRMLMYNFPTRAGQCGGVLMSTGKVLGIHVGGNGHQGFSAALLRHYFNEEQGEIEFIESSKDAGFPVINTPSKTKLEPSVFHQVFEGNKEPAVLRNGDPRLKADFEEAIFSKYIGNVNTHVDEYMQEAVDHYAGQLATLDISTEPMKLEDAVYGTEGLEALDLTTSAGYPYVALGIKKRDILSKRTKDLTKLKECMDKYGLNLPMVTYVKDELRSAEKSPRGKSRLIEASSLNDSVAMRQTFGNLYKVFHLNPGIVTGSAVGCDPDVFWSKIPVMLDGHLIAFDYSGYDASLSPVWFACLKLLLEKLGYSSKETNYIDYLCNSHHLYRDKHYFVRGGMPSGCSGTSIFNSMINNIIIRTLMLKVYKGIDLDQFRMIAYGDDVIASYPWPIDASLLAEAGKDYGLIMTPADKGECFNEVTWTNVTFLKRYFRADEQYPFLVHPVMPMKDIHESIRWTKDPKNTQDHVRSLCLLAWHNGEHEYEEFIHKIRSVPVGRCLTLPAFSTLRRKWLDSF.

Gly2 is lipidated: N-myristoyl glycine; by host. Residues 2 to 1513 (GAQVSTQKTG…HVSRAFICLQ (1512 aa)) lie on the Cytoplasmic side of the membrane. Residues 567 to 583 (ELQNDVRQAVEGAIGRV) are amphipathic alpha-helix. Residues His890 and Asp908 each act as for protease 2A activity in the active site. Zn(2+)-binding residues include Cys925 and Cys927. Catalysis depends on Cys979, which acts as the For protease 2A activity. Zn(2+) contacts are provided by Cys985 and His987. The tract at residues 1119-1191 (SNGWLKKFTE…EQSAPSQSDQ (73 aa)) is membrane-binding. The interval 1119–1257 (SNGWLKKFTE…SPGAGKSVAT (139 aa)) is oligomerization. Residues 1140 to 1144 (AVKIQ) form an RNA-binding region. The 157-residue stretch at 1223–1379 (EKKMSNYIQF…SMYSQNGKIN (157 aa)) folds into the SF3 helicase domain. 3 residues coordinate Zn(2+): Cys1387, Cys1399, and Cys1404. The C4-type; degenerate zinc finger occupies 1387-1404 (CDEECCPVNFKRCCPLVC). Residues 1431–1438 (EYNHRHSV) form an RNA-binding region. Residues 1442 to 1447 (LEALFQ) form an oligomerization region. Residues 1514–1529 (ALTTFVSVAGIIYIIY) lie within the membrane without spanning it. Residues 1530 to 2203 (KLFAGFQGAY…TLRRKWLDSF (674 aa)) lie on the Cytoplasmic side of the membrane. Residue Tyr1539 is modified to O-(5'-phospho-RNA)-tyrosine. Residues 1559–1737 (GPAFEFAVAM…FSAALLRHYF (179 aa)) enclose the Peptidase C3 domain. Catalysis depends on for protease 3C activity residues His1598, Glu1629, and Cys1705. Residues 1968 to 2084 (GHLIAFDYSG…SYPWPIDASL (117 aa)) enclose the RdRp catalytic domain. Residues Asp1974 and Asp2070 each coordinate Mg(2+).

The protein belongs to the picornaviruses polyprotein family. As to quaternary structure, interacts with capsid protein VP1 and capsid protein VP3 to form heterotrimeric protomers. In terms of assembly, interacts with capsid protein VP0, and capsid protein VP3 to form heterotrimeric protomers. Five protomers subsequently associate to form pentamers which serve as building blocks for the capsid. Interacts with capsid protein VP2, capsid protein VP3 and capsid protein VP4 following cleavage of capsid protein VP0. Interacts with capsid protein VP1 and capsid protein VP3 in the mature capsid. As to quaternary structure, interacts with capsid protein VP0 and capsid protein VP1 to form heterotrimeric protomers. Five protomers subsequently associate to form pentamers which serve as building blocks for the capsid. Interacts with capsid protein VP4 in the mature capsid. Interacts with protein 2C; this interaction may be important for virion morphogenesis. In terms of assembly, interacts with capsid protein VP1 and capsid protein VP3. Homodimer. As to quaternary structure, homohexamer; forms a hexameric ring structure with 6-fold symmetry characteristic of AAA+ ATPases. Interacts (via N-terminus) with host RTN3 (via reticulon domain); this interaction is important for viral replication. Interacts with capsid protein VP3; this interaction may be important for virion morphogenesis. In terms of assembly, interacts with protein 3CD. Homodimer. Interacts with host GBF1. Interacts (via GOLD domain) with host ACBD3 (via GOLD domain); this interaction allows the formation of a viral protein 3A/ACBD3 heterotetramer with a 2:2 stoichiometry, which will stimulate the recruitment of host PI4KB in order to synthesize PI4P at the viral RNA replication sites. As to quaternary structure, interacts with RNA-directed RNA polymerase. In terms of assembly, interacts with protein 3AB and with RNA-directed RNA polymerase. Interacts with Viral protein genome-linked and with protein 3CD. The cofactor is Mg(2+). Post-translationally, specific enzymatic cleavages in vivo by the viral proteases yield processing intermediates and the mature proteins. Myristoylation is required for the formation of pentamers during virus assembly. Further assembly of 12 pentamers and a molecule of genomic RNA generates the provirion. In terms of processing, during virion maturation, immature virions are rendered infectious following cleavage of VP0 into VP4 and VP2. This maturation seems to be an autocatalytic event triggered by the presence of RNA in the capsid and it is followed by a conformational change infectious virion. Post-translationally, myristoylation is required during RNA encapsidation and formation of the mature virus particle. VPg is uridylylated by the polymerase into VPg-pUpU. This acts as a nucleotide-peptide primer for the genomic RNA replication.

The protein resides in the virion. It localises to the host cytoplasm. The protein localises to the host cytoplasmic vesicle membrane. It is found in the host nucleus. It catalyses the reaction a ribonucleoside 5'-triphosphate + H2O = a ribonucleoside 5'-diphosphate + phosphate + H(+). The catalysed reaction is Selective cleavage of Tyr-|-Gly bond in the picornavirus polyprotein.. The enzyme catalyses RNA(n) + a ribonucleoside 5'-triphosphate = RNA(n+1) + diphosphate. It carries out the reaction Selective cleavage of Gln-|-Gly bond in the poliovirus polyprotein. In other picornavirus reactions Glu may be substituted for Gln, and Ser or Thr for Gly.. Its activity is regulated as follows. Replication or transcription is subject to high level of random mutations by the nucleotide analog ribavirin. Forms an icosahedral capsid of pseudo T=3 symmetry with capsid proteins VP2 and VP3. The capsid is 300 Angstroms in diameter, composed of 60 copies of each capsid protein and enclosing the viral positive strand RNA genome. Capsid protein VP1 mainly forms the vertices of the capsid. Capsid protein VP1 interacts with host cell receptor to provide virion attachment to target host cells. This attachment induces virion internalization. Tyrosine kinases are probably involved in the entry process. After binding to its receptor, the capsid undergoes conformational changes. Capsid protein VP1 N-terminus (that contains an amphipathic alpha-helix) and capsid protein VP4 are externalized. Together, they shape a pore in the host membrane through which viral genome is translocated to host cell cytoplasm. Its function is as follows. Forms an icosahedral capsid of pseudo T=3 symmetry with capsid proteins VP2 and VP3. The capsid is 300 Angstroms in diameter, composed of 60 copies of each capsid protein and enclosing the viral positive strand RNA genome. Functionally, lies on the inner surface of the capsid shell. After binding to the host receptor, the capsid undergoes conformational changes. Capsid protein VP4 is released, Capsid protein VP1 N-terminus is externalized, and together, they shape a pore in the host membrane through which the viral genome is translocated into the host cell cytoplasm. In terms of biological role, component of immature procapsids, which is cleaved into capsid proteins VP4 and VP2 after maturation. Allows the capsid to remain inactive before the maturation step. Cysteine protease that cleaves viral polyprotein and specific host proteins. It is responsible for the autocatalytic cleavage between the P1 and P2 regions, which is the first cleavage occurring in the polyprotein. Also cleaves the host translation initiation factor EIF4G1, in order to shut down the capped cellular mRNA translation. Inhibits the host nucleus-cytoplasm protein and RNA trafficking by cleaving host members of the nuclear pores. Counteracts stress granule formation probably by antagonizing its assembly or promoting its dissassembly. Its function is as follows. Plays an essential role in the virus replication cycle by acting as a viroporin. Creates a pore in the host endoplasmic reticulum and as a consequence releases Ca2+ in the cytoplasm of infected cell. In turn, high levels of cytoplasmic calcium may trigger membrane trafficking and transport of viral ER-associated proteins to viroplasms, sites of viral genome replication. Functionally, induces and associates with structural rearrangements of intracellular membranes. Displays RNA-binding, nucleotide binding and NTPase activities. May play a role in virion morphogenesis and viral RNA encapsidation by interacting with the capsid protein VP3. In terms of biological role, localizes the viral replication complex to the surface of membranous vesicles. Together with protein 3CD binds the Cis-Active RNA Element (CRE) which is involved in RNA synthesis initiation. Acts as a cofactor to stimulate the activity of 3D polymerase, maybe through a nucleid acid chaperone activity. Localizes the viral replication complex to the surface of membranous vesicles. It inhibits host cell endoplasmic reticulum-to-Golgi apparatus transport and causes the disassembly of the Golgi complex, possibly through GBF1 interaction. This would result in depletion of MHC, trail receptors and IFN receptors at the host cell surface. Plays an essential role in viral RNA replication by recruiting ACBD3 and PI4KB at the viral replication sites, thereby allowing the formation of the rearranged membranous structures where viral replication takes place. Its function is as follows. Acts as a primer for viral RNA replication and remains covalently bound to viral genomic RNA. VPg is uridylylated prior to priming replication into VPg-pUpU. The oriI viral genomic sequence may act as a template for this. The VPg-pUpU is then used as primer on the genomic RNA poly(A) by the RNA-dependent RNA polymerase to replicate the viral genome. During genome replication, the VPg-RNA linkage is removed by the host TDP2, thereby accelerating replication. During the late stage of the replication cycle, host TDP2 is excluded from sites of viral RNA synthesis and encapsidation, allowing for the generation of progeny virions. Functionally, involved in the viral replication complex and viral polypeptide maturation. It exhibits protease activity with a specificity and catalytic efficiency that is different from protease 3C. Protein 3CD lacks polymerase activity. Protein 3CD binds to the 5'UTR of the viral genome. In terms of biological role, replicates the viral genomic RNA on the surface of intracellular membranes. May form linear arrays of subunits that propagate along a strong head-to-tail interaction called interface-I. Covalently attaches UMP to a tyrosine of VPg, which is used to prime RNA synthesis. The positive stranded RNA genome is first replicated at virus induced membranous vesicles, creating a dsRNA genomic replication form. This dsRNA is then used as template to synthesize positive stranded RNA genomes. ss(+)RNA genomes are either translated, replicated or encapsidated. Major viral protease that mediates proteolytic processing of the polyprotein. Cleaves host EIF5B, contributing to host translation shutoff. Also cleaves host PABPC1, contributing to host translation shutoff. Cleaves host NLRP1, triggers host N-glycine-mediated degradation of the autoinhibitory NLRP1 N-terminal fragment. The protein is Genome polyprotein of Echovirus 9 (strain Barty).